Consider the following 228-residue polypeptide: MLLPIPDVLTPAQLSQLRERLDAADWADGRITAGHQSAQAKDNAQLPEDSPIAREASALVLDALSRSSTFFSAALPRRIYPPLFNRYSGGQSFGYHVDNAVRYDRSRGGADPVRTDVSATLFLSDPESYDGGELVIEDTYGTQSVKLPAGHLVIYPGTSLHKVMPVTRGTRVASFFWIQSMLRNDAQRRLLFELDVSIRRLTQDTPGHPSLIQLTGVYHNLLRQWADV.

In terms of domain architecture, Fe2OG dioxygenase spans 78 to 180 (RIYPPLFNRY…RVASFFWIQS (103 aa)). Fe cation contacts are provided by His96, Asp98, and His161. Arg171 contacts 2-oxoglutarate.

The cofactor is Fe(2+). L-ascorbate is required as a cofactor.

This is PKHD-type hydroxylase xcc-b100_1388 from Xanthomonas campestris pv. campestris (strain B100).